A 280-amino-acid polypeptide reads, in one-letter code: 4-diphosphocytidyl-2-C-methyl-D-erythritol kinase (280 aa).

Residue Lys8 is part of the active site. An ATP-binding site is contributed by 91–101 (PIEAGLAGGSS). Asp133 is a catalytic residue.

Belongs to the GHMP kinase family. IspE subfamily.

It catalyses the reaction 4-CDP-2-C-methyl-D-erythritol + ATP = 4-CDP-2-C-methyl-D-erythritol 2-phosphate + ADP + H(+). The protein operates within isoprenoid biosynthesis; isopentenyl diphosphate biosynthesis via DXP pathway; isopentenyl diphosphate from 1-deoxy-D-xylulose 5-phosphate: step 3/6. Catalyzes the phosphorylation of the position 2 hydroxy group of 4-diphosphocytidyl-2C-methyl-D-erythritol. The chain is 4-diphosphocytidyl-2-C-methyl-D-erythritol kinase from Clostridium tetani (strain Massachusetts / E88).